The chain runs to 436 residues: Deoxyuridine 5'-triphosphate nucleotidohydrolase (436 aa).

Substrate-binding positions include arginine 328–serine 330 and phenylalanine 431–glycine 432.

This sequence belongs to the dUTPase family. Mg(2+) is required as a cofactor.

It carries out the reaction dUTP + H2O = dUMP + diphosphate + H(+). Functionally, involved in nucleotide metabolism: produces dUMP, the immediate precursor of thymidine nucleotides and decreases the intracellular concentration of dUTP to avoid uracil incorporation into viral DNA. The protein is Deoxyuridine 5'-triphosphate nucleotidohydrolase of Gallid herpesvirus 2 (strain Chicken/Md5/ATCC VR-987) (GaHV-2).